The sequence spans 519 residues: DNA-directed RNA polymerase subunit Rpo2N (519 aa).

Belongs to the RNA polymerase beta chain family. As to quaternary structure, part of the RNA polymerase complex.

The protein resides in the cytoplasm. The enzyme catalyses RNA(n) + a ribonucleoside 5'-triphosphate = RNA(n+1) + diphosphate. Its function is as follows. DNA-dependent RNA polymerase (RNAP) catalyzes the transcription of DNA into RNA using the four ribonucleoside triphosphates as substrates. The Rpo2 subunit (Rpo2N and Rpo2C in this organism) is implicated in DNA promoter recognition and in nucleotide binding. The protein is DNA-directed RNA polymerase subunit Rpo2N of Methanothermobacter thermautotrophicus (strain ATCC 29096 / DSM 1053 / JCM 10044 / NBRC 100330 / Delta H) (Methanobacterium thermoautotrophicum).